The primary structure comprises 293 residues: MEPGLCSRAYLLVGGLWTAISKALFAEFLATGLYVFFGVGSVLPWPVALPSVLQIAITFNLATATAVQISWKTSGAHANPAVTLAYLVGSHISLPRAMAYIAAQLAGATAGAALLYGVTPGGIRETLGVNVVHNSTSTGQAVAVELVLTLQLVLCVFASMDGRQTLASPAAMIGTSVALGHLIGIYFTGCSMNPARSFGPAVIVGKFAVHWIFWVGPLTGAVLASLIYNFILFPDTKTVAQRLAILVGTTKVEKVVDLEPQKKESQTNSEDTECLTSPCEEAVRSFSFTLGLC.

At 1 to 22 the chain is on the cytoplasmic side; the sequence is MEPGLCSRAYLLVGGLWTAISK. Residues 23 to 43 form a helical membrane-spanning segment; sequence ALFAEFLATGLYVFFGVGSVL. Over 44-51 the chain is Extracellular; that stretch reads PWPVALPS. The chain crosses the membrane as a helical span at residues 52–70; the sequence is VLQIAITFNLATATAVQIS. At 71–75 the chain is on the cytoplasmic side; sequence WKTSG. Positions 76 to 85 form an intramembrane region, discontinuously helical; the sequence is AHANPAVTLA. The short motif at 79–81 is the NPA 1 element; the sequence is NPA. At 86-96 the chain is on the cytoplasmic side; that stretch reads YLVGSHISLPR. A helical transmembrane segment spans residues 97-118; sequence AMAYIAAQLAGATAGAALLYGV. At 119-138 the chain is on the extracellular side; that stretch reads TPGGIRETLGVNVVHNSTST. Asparagine 134 carries an N-linked (GlcNAc...) asparagine glycan. Residues 139 to 159 form a helical membrane-spanning segment; that stretch reads GQAVAVELVLTLQLVLCVFAS. The Cytoplasmic segment spans residues 160–165; that stretch reads MDGRQT. A helical transmembrane segment spans residues 166 to 185; that stretch reads LASPAAMIGTSVALGHLIGI. Residues 186 to 189 are Extracellular-facing; sequence YFTG. The segment at residues 190–202 is an intramembrane region (discontinuously helical); sequence CSMNPARSFGPAV. Residues 193–195 carry the NPA 2 motif; sequence NPA. The Extracellular portion of the chain corresponds to 203–210; the sequence is IVGKFAVH. Residues 211–231 traverse the membrane as a helical segment; it reads WIFWVGPLTGAVLASLIYNFI. Topologically, residues 232-293 are cytoplasmic; that stretch reads LFPDTKTVAQ…RSFSFTLGLC (62 aa).

This sequence belongs to the MIP/aquaporin (TC 1.A.8) family. As to quaternary structure, homotetramer; each monomer provides an independent solute pore.

The protein localises to the cytoplasmic vesicle membrane. It catalyses the reaction nitrate(in) = nitrate(out). It carries out the reaction iodide(out) = iodide(in). The catalysed reaction is bromide(in) = bromide(out). The enzyme catalyses chloride(in) = chloride(out). It catalyses the reaction Na(+)(in) = Na(+)(out). It carries out the reaction H2O(in) = H2O(out). The catalysed reaction is CO2(out) = CO2(in). The enzyme catalyses NH4(+)(in) = NH4(+)(out). Aquaporins form homotetrameric transmembrane channels, with each monomer independently mediating water transport across the plasma membrane along its osmotic gradient. Unlike classical aquaporins, AQP6 is an intracellular channel with selective anion permeability, particularly for nitrate, and exhibits very low water permeability. It may also facilitate the transport of gases, such as CO2 and NH4(+), as demonstrated in vitro. The protein is Aquaporin-6 of Mus musculus (Mouse).